The chain runs to 1399 residues: MADSHDAPFRLRSYQAEMVEESMQSNIICVMDTGSGKTHIAIDRTRAELEICRPDKIVWFLAPTVTLCEQQFAVFKSNLPGYGIQLLSGKDNLDHWTDQGVWDDVLLNIRIVLSTHQVLLDALSHGFVKMRNLSLLIFDEAHHCSLKHPAHRIMSDFYKPRIGTELPRILGLSASPIKTAKVTSEDLQQIERNLCATVKTPKLHRSELLRYVHRPHLMRIDYPVEPQDLQSNMLSFLKSAYTNYDLQKDPWVSELLQQRQQGHDVTKNIHKVFIGGKTYCRDQLRSLALKAEAMSQELGMSVMDWYLRGCITQFSKMVHMSDSQLLDWSADEKRHLLEILRTLPSIDLNSHDIPPMSLGSMSHKLQLLIKFLVAEAKHDPEFTCLVFVEQRVWVACIAEVLAIHPETRDLLRVGTFVGESENSKRKANIASISEPRNQQATLENFRAGKLNLILATSVLEEGIDVSSCHLVVCFESPKNLKSFVQRRGRARKEESKYVIFVPQAGRRRDPESWQSLEEGMKAAYLDDLRQVKLATEKEQQSETGHRNFEVKSTGALLTLDNASQHLHHFCSILGAGPYIDNRPQFEFTEIRPGVITARVILPLTVDPEVRTACALDTWATEKMAKQDAAFEAYKALYVAGLVNDNLLPARQEADDELSELQIPDHRPSLVPVSPTLDPWPLFARHQQQNPHVYYRTRLTLHTVDDKPKHLILLTPKILPDIPELLLYWNSSTKLKIESSWLHDVVLNDEEISELKSVTYKILYSVFHNRMELNRRDFVWLVAPCDESGLLDSRIWLSEWRQHTCLATELIAQNSDWSLWGLVNQKGDARKYTPRSTSMNNQLWLLQLMQLPKRRDFLHPVLESANINDAYTKTDEMAAKDCIVDPVPAPYSVFALLLPSILHRFGMAIIAETLRTTLLGPVALDSAHSLLLTRALKSSAADGNDNYQRLEFLGDCILKFIATVHLMAANPKWPESHLTAKKGRIVSNGFLARATIAAGLDRFMITKSFTGAKWAPRYAGDLLAETGPAVKEERSSKLIADIIESLIGACYTVGGFEKAVLCVQTLLPLEPWISVPAANSILHEAAPAEADLMGLDVLETLIGYTFKKKPLLLEALTHASFSGPHVHCSYERLEFLGDAVLDYIISKRLHAHSPELSHQKMHAIRTATVNASFLAFRLFETTIDEETINKTSMRPESQKRAIWQFLRSGSPSLNANRDNALRQHEQVRDEIIIGLNEAARFPWHLFALTDPPKFLSDMVESVIGAVYIDSLGDILTCEAIVRRLGILDCLDHILCNGVDCLHPKERLGHLAVDKGVQYARVGMNTEPNEGDKMYKCQVKVGGEDVGDVAEGLKRLNAETVAAWKAVGVLESRKDSAIEIVSDVEEFFDADDGGGISLDDP.

A Helicase ATP-binding domain is found at 18–194; sequence MVEESMQSNI…EDLQQIERNL (177 aa). ATP is bound at residue 31-38; that stretch reads MDTGSGKT. Positions 139–142 match the DEAH box motif; it reads DEAH. The Helicase C-terminal domain occupies 364-549; sequence KLQLLIKFLV…QSETGHRNFE (186 aa). The region spanning 562–656 is the Dicer dsRNA-binding fold domain; it reads ASQHLHHFCS…LPARQEADDE (95 aa). 2 RNase III domains span residues 897-1054 and 1094-1270; these read LPSI…TVGG and LDVL…IDSL. Glu-1133, Asp-1256, and Glu-1259 together coordinate Mg(2+). In terms of domain architecture, DRBM spans 1301-1370; the sequence is HPKERLGHLA…AWKAVGVLES (70 aa).

The protein belongs to the helicase family. Dicer subfamily. Requires Mg(2+) as cofactor. Mn(2+) is required as a cofactor.

In terms of biological role, dicer-like endonuclease involved in cleaving double-stranded RNA in the RNA interference (RNAi) pathway. Produces 21 to 25 bp dsRNAs (siRNAs) which target the selective destruction of homologous RNAs leading to sequence-specific suppression of gene expression, called post-transcriptional gene silencing (PTGS). Part of a broad host defense response against viral infection and transposons. The protein is Dicer-like protein 2 (DCL2) of Phaeosphaeria nodorum (strain SN15 / ATCC MYA-4574 / FGSC 10173) (Glume blotch fungus).